Here is a 232-residue protein sequence, read N- to C-terminus: Large ribosomal subunit protein uL1 (232 aa).

Belongs to the universal ribosomal protein uL1 family. Part of the 50S ribosomal subunit.

Binds directly to 23S rRNA. The L1 stalk is quite mobile in the ribosome, and is involved in E site tRNA release. Functionally, protein L1 is also a translational repressor protein, it controls the translation of the L11 operon by binding to its mRNA. In Bordetella bronchiseptica (strain ATCC BAA-588 / NCTC 13252 / RB50) (Alcaligenes bronchisepticus), this protein is Large ribosomal subunit protein uL1.